The sequence spans 68 residues: Adipokinetic prohormone type 1 (68 aa).

An N-terminal signal peptide occupies residues Met-1 to Ala-20. A Pyrrolidone carboxylic acid modification is found at Gln-21. Glycine amide is present on Gly-30. Residues Gly-34–Pro-68 constitute a propeptide that is removed on maturation.

Expressed in antennal lobe (AL), corpora cardiaca (CC), corpora allata (CA) and gnathal ganglion (GNG) (at protein level). Expression in CC and CA detected in all animals, expression in GNG in some animals and in AL in few animals (at protein level).

Its subcellular location is the secreted. This hormone, released from cells in the corpora cardiaca, causes release of diglycerides from the fat body and stimulation of muscles to use these diglycerides as an energy source during energy-demanding processes. The polypeptide is Adipokinetic prohormone type 1 (Agrotis ipsilon (Black cutworm moth)).